We begin with the raw amino-acid sequence, 383 residues long: Succinate--CoA ligase [ADP-forming] subunit beta 2 (383 aa).

The 223-residue stretch at 9-231 (RELFKEHGIV…QEDADSLEAR (223 aa)) folds into the ATP-grasp domain. Residues Lys45, 52–54 (GRG), Cys94, and Glu99 contribute to the ATP site. Asn187 and Asp201 together coordinate Mg(2+). Residues Asn251 and 308–310 (GIT) each bind substrate.

The protein belongs to the succinate/malate CoA ligase beta subunit family. Heterotetramer of two alpha and two beta subunits. The cofactor is Mg(2+).

The catalysed reaction is succinate + ATP + CoA = succinyl-CoA + ADP + phosphate. The enzyme catalyses GTP + succinate + CoA = succinyl-CoA + GDP + phosphate. The protein operates within carbohydrate metabolism; tricarboxylic acid cycle; succinate from succinyl-CoA (ligase route): step 1/1. Functionally, succinyl-CoA synthetase functions in the citric acid cycle (TCA), coupling the hydrolysis of succinyl-CoA to the synthesis of either ATP or GTP and thus represents the only step of substrate-level phosphorylation in the TCA. The beta subunit provides nucleotide specificity of the enzyme and binds the substrate succinate, while the binding sites for coenzyme A and phosphate are found in the alpha subunit. The sequence is that of Succinate--CoA ligase [ADP-forming] subunit beta 2 from Streptomyces coelicolor (strain ATCC BAA-471 / A3(2) / M145).